The primary structure comprises 460 residues: Hydroxymethylglutaryl-CoA synthase erg13B (460 aa).

Residue Glu-86 is the Proton donor/acceptor of the active site. Residue Cys-120 is the Acyl-thioester intermediate of the active site. (3S)-3-hydroxy-3-methylglutaryl-CoA contacts are provided by Cys-120, Thr-162, Ser-212, His-263, Lys-272, Asn-340, and Ser-374. The Proton donor/acceptor role is filled by His-263.

It belongs to the thiolase-like superfamily. HMG-CoA synthase family.

The enzyme catalyses acetoacetyl-CoA + acetyl-CoA + H2O = (3S)-3-hydroxy-3-methylglutaryl-CoA + CoA + H(+). It participates in metabolic intermediate biosynthesis; (R)-mevalonate biosynthesis; (R)-mevalonate from acetyl-CoA: step 2/3. Functionally, hydroxymethylglutaryl-CoA synthase; part of the first module of ergosterol biosynthesis pathway that includes the early steps of the pathway, conserved across all eukaryotes, and which results in the formation of mevalonate from acetyl-coenzyme A (acetyl-CoA). Erg13A and erg13B condense acetyl-CoA with acetoacetyl-CoA to form hydroxymethylglutaryl-CoA (HMG-CoA). The first module starts with the action of the cytosolic acetyl-CoA acetyltransferase erg10B that catalyzes the formation of acetoacetyl-CoA. The hydroxymethylglutaryl-CoA synthases erg13A and erg13B then condense acetyl-CoA with acetoacetyl-CoA to form HMG-CoA. The rate-limiting step of the early module is the reduction to mevalonate by the 3-hydroxy-3-methylglutaryl-coenzyme A (HMG-CoA) reductases hmg1 and hmg2. Mevalonate is also a precursor for the extracellular siderophore triacetylfusarinine C (TAFC). The sequence is that of Hydroxymethylglutaryl-CoA synthase erg13B from Aspergillus fumigatus (strain ATCC MYA-4609 / CBS 101355 / FGSC A1100 / Af293) (Neosartorya fumigata).